Consider the following 225-residue polypeptide: Ribosomal RNA large subunit methyltransferase E (225 aa).

S-adenosyl-L-methionine-binding residues include G76, W78, D99, D115, and D139. Residue K179 is the Proton acceptor of the active site.

Belongs to the class I-like SAM-binding methyltransferase superfamily. RNA methyltransferase RlmE family.

It localises to the cytoplasm. It carries out the reaction uridine(2552) in 23S rRNA + S-adenosyl-L-methionine = 2'-O-methyluridine(2552) in 23S rRNA + S-adenosyl-L-homocysteine + H(+). Its function is as follows. Specifically methylates the uridine in position 2552 of 23S rRNA at the 2'-O position of the ribose in the fully assembled 50S ribosomal subunit. This Afipia carboxidovorans (strain ATCC 49405 / DSM 1227 / KCTC 32145 / OM5) (Oligotropha carboxidovorans) protein is Ribosomal RNA large subunit methyltransferase E.